Consider the following 332-residue polypeptide: Cell division protein ZipA (332 aa).

The Periplasmic segment spans residues 1-6; sequence MMQDLR. Residues 7 to 27 form a helical membrane-spanning segment; that stretch reads LILIVVGAIAIIALLLHGLWT. Over 28–332 the chain is Cytoplasmic; it reads SRKERSSLFR…RLREVLENNA (305 aa). Basic and acidic residues-rich tracts occupy residues 34–51 and 61–72; these read SLFR…REQS and GEVRVRSAHPED. The tract at residues 34–184 is disordered; sequence SLFRDRPAKR…PAVAHEPQPA (151 aa). Residues 98–107 show a composition bias toward low complexity; the sequence is PAPRAVQPAA. The span at 121 to 136 shows a compositional bias: acidic residues; the sequence is DDILLDNYAQEEDDEP. Low complexity predominate over residues 155-171; sequence PAAEPAFHAEPAHQPQP.

It belongs to the ZipA family. Interacts with FtsZ via their C-terminal domains.

It localises to the cell inner membrane. Essential cell division protein that stabilizes the FtsZ protofilaments by cross-linking them and that serves as a cytoplasmic membrane anchor for the Z ring. Also required for the recruitment to the septal ring of downstream cell division proteins. The chain is Cell division protein ZipA from Serratia proteamaculans (strain 568).